A 310-amino-acid chain; its full sequence is MARTSESSPYVEFDRKQWRTLRKSTPLVLTEEELYGLRGLGEQIDLEEVAEVYLPLSRLIHLQVAARQRLFAATATFLGEKHPDQQVPFVIGVAGSVAVGKSTTARVLQALLARWEHHPRVDLVTTDGFLYPTAELNRRGIMHRKGFPESYDRRKLLRFVTEVKSGAEEVAAPVYSHISYDIIPGQYHLIRQPDILIIEGLNVLQTGPRLMVSDLFDFSIYVDARIEDIENWYIQRFLALRKTSFSDPDAHFHHYAGLSDRDATAAAQEIWHNINRPNLVENILPTRPRATLVLRKDANHSINRLRLRKL.

95-102 (GSVAVGKS) contributes to the ATP binding site.

This sequence belongs to the prokaryotic pantothenate kinase family.

The protein resides in the cytoplasm. The catalysed reaction is (R)-pantothenate + ATP = (R)-4'-phosphopantothenate + ADP + H(+). It functions in the pathway cofactor biosynthesis; coenzyme A biosynthesis; CoA from (R)-pantothenate: step 1/5. The protein is Pantothenate kinase of Rhodococcus jostii (strain RHA1).